The sequence spans 461 residues: Photosystem II CP43 reaction center protein (461 aa).

Residues 1–2 (ME) constitute a propeptide that is removed on maturation. Threonine 3 is modified (N-acetylthreonine). Threonine 3 is subject to Phosphothreonine. 5 consecutive transmembrane segments (helical) span residues 57-81 (LFEVAHFVPEKPMYEQGLILLPHIA), 122-143 (LIGPETLEESFPFFGYIWKDKN), 166-188 (KAMYFGGVYDTWAAGGGDVRIIS), 243-263 (KPWGWARRAFVWSGEAYLSYS), and 279-300 (WFNNTAYPSEFYGPTGPEASQA). Residue glutamate 355 coordinates [CaMn4O5] cluster. The helical transmembrane segment at 435–459 (RARAAAAGFEKGIDRDTEPVLSMKP) threads the bilayer.

The protein belongs to the PsbB/PsbC family. PsbC subfamily. In terms of assembly, PSII is composed of 1 copy each of membrane proteins PsbA, PsbB, PsbC, PsbD, PsbE, PsbF, PsbH, PsbI, PsbJ, PsbK, PsbL, PsbM, PsbT, PsbX, PsbY, PsbZ, Psb30/Ycf12, at least 3 peripheral proteins of the oxygen-evolving complex and a large number of cofactors. It forms dimeric complexes. It depends on Binds multiple chlorophylls and provides some of the ligands for the Ca-4Mn-5O cluster of the oxygen-evolving complex. It may also provide a ligand for a Cl- that is required for oxygen evolution. PSII binds additional chlorophylls, carotenoids and specific lipids. as a cofactor.

It is found in the plastid. The protein localises to the chloroplast thylakoid membrane. Its function is as follows. One of the components of the core complex of photosystem II (PSII). It binds chlorophyll and helps catalyze the primary light-induced photochemical processes of PSII. PSII is a light-driven water:plastoquinone oxidoreductase, using light energy to abstract electrons from H(2)O, generating O(2) and a proton gradient subsequently used for ATP formation. The polypeptide is Photosystem II CP43 reaction center protein (Oltmannsiellopsis viridis (Marine flagellate)).